Consider the following 263-residue polypeptide: SPRY domain-containing SOCS box protein 2 (263 aa).

The segment covering 1–16 has biased composition (polar residues); that stretch reads MGQTALAGGSSSTPTP. The tract at residues 1-48 is disordered; it reads MGQTALAGGSSSTPTPQALYPDLSCPEGLEELLSAPPPDLGAQRRHGW. A B30.2/SPRY domain is found at 26 to 221; it reads PEGLEELLSA…VRIRYLGERR (196 aa). The region spanning 222–263 is the SOCS box domain; that stretch reads AEPHSLLHLSRLCVRHNLGDTRLGQVSALPLPPAMKRYLLYQ.

It belongs to the SPSB family. As to quaternary structure, component of the probable ECS(SPSB2) E3 ubiquitin-protein ligase complex which contains CUL5, RNF7/RBX2, Elongin BC complex and SPSB2. Interacts with CUL5, RNF7, ELOB and ELOC. Interacts with MET. Interacts (via B30.2/SPRY domain) with PAWR; this interaction occurs in association with the Elongin BC complex. Interacts with NOS2. In terms of assembly, (Microbial infection) Interacts (via C-terminus) with HCV envelope glycoprotein E1. Interacts (via C-terminus) with HCV non-structural protein 5A; this interaction targets NS5A for ubiquitination and degradation.

Its subcellular location is the cytoplasm. The protein localises to the cytosol. The protein operates within protein modification; protein ubiquitination. In terms of biological role, substrate recognition component of a SCF-like ECS (Elongin BC-CUL2/5-SOCS-box protein) E3 ubiquitin-protein ligase complex which mediates the ubiquitination and subsequent proteasomal degradation of target proteins. Negatively regulates nitric oxide (NO) production and limits cellular toxicity in activated macrophages by mediating the ubiquitination and proteasomal degradation of NOS2. Acts as a bridge which links NOS2 with the ECS E3 ubiquitin ligase complex components ELOC and CUL5. The protein is SPRY domain-containing SOCS box protein 2 (SPSB2) of Homo sapiens (Human).